Consider the following 928-residue polypeptide: cGMP-dependent 3',5'-cyclic phosphodiesterase (928 aa).

At serine 109 the chain carries Phosphoserine. The interval 188-210 (RRPEAVQNTSADPSEDQKDEKGY) is disordered. GAF domains follow at residues 228 to 365 (DATS…GTVL) and 397 to 536 (DVSV…GISI). Residues serine 419, aspartate 434, isoleucine 453, tyrosine 476, and threonine 487 each contribute to the 3',5'-cyclic GMP site. The PDEase domain maps to 566–890 (SDDEYTKLLH…EHWTKVSHKF (325 aa)). The active-site Proton donor is histidine 644. Histidine 648, histidine 684, aspartate 685, and aspartate 796 together coordinate Zn(2+). Aspartate 685 contacts Mg(2+).

Belongs to the cyclic nucleotide phosphodiesterase family. PDE2 subfamily. As to quaternary structure, homodimer. Zn(2+) serves as cofactor. Mg(2+) is required as a cofactor. In terms of tissue distribution, expressed in brain and liver.

Its subcellular location is the cell membrane. The protein resides in the cytoplasm. It localises to the mitochondrion matrix. The protein localises to the mitochondrion inner membrane. It is found in the mitochondrion outer membrane. It carries out the reaction a nucleoside 3',5'-cyclic phosphate + H2O = a nucleoside 5'-phosphate + H(+). It catalyses the reaction 3',5'-cyclic GMP + H2O = GMP + H(+). The catalysed reaction is 3',5'-cyclic AMP + H2O = AMP + H(+). With respect to regulation, the 3',5'-cyclic-AMP phosphodiesterase activity is stimulated by 3',5'-cyclic GMP. Specifically inhibited by Bay 60-7550. When repressed, protected from ionomycin- but not staurosporin-induced cell death. CGMP-activated cyclic nucleotide phosphodiesterase with a dual-specificity for the second messengers cAMP and cGMP, which are key regulators of many important physiological processes. Has a higher efficiency with cGMP compared to cAMP. Plays a role in cell growth and migration. Its function is as follows. Regulates mitochondrial cAMP levels and respiration. Involved in the regulation of mitochondria morphology/dynamics and apoptotic cell death via local modulation of cAMP/PKA signaling in the mitochondrion, including the monitoring of local cAMP levels at the outer mitochondrial membrane and of PKA-dependent phosphorylation of Dnm1l. The chain is cGMP-dependent 3',5'-cyclic phosphodiesterase from Rattus norvegicus (Rat).